Consider the following 98-residue polypeptide: NADH-ubiquinone oxidoreductase chain 4L (98 aa).

Transmembrane regions (helical) follow at residues 2–22, 30–50, and 61–81; these read PFIY…LLLF, LLCL…TTLG, and IILM…LVTI.

It belongs to the complex I subunit 4L family. As to quaternary structure, core subunit of respiratory chain NADH dehydrogenase (Complex I) which is composed of 45 different subunits.

The protein resides in the mitochondrion inner membrane. It carries out the reaction a ubiquinone + NADH + 5 H(+)(in) = a ubiquinol + NAD(+) + 4 H(+)(out). In terms of biological role, core subunit of the mitochondrial membrane respiratory chain NADH dehydrogenase (Complex I) which catalyzes electron transfer from NADH through the respiratory chain, using ubiquinone as an electron acceptor. Part of the enzyme membrane arm which is embedded in the lipid bilayer and involved in proton translocation. The sequence is that of NADH-ubiquinone oxidoreductase chain 4L (MT-ND4L) from Bradypus tridactylus (Pale-throated three-toed sloth).